Consider the following 121-residue polypeptide: UPF0344 protein BT9727_1053 (121 aa).

Helical transmembrane passes span 6-26 (ITAW…YSAG), 38-58 (LMYI…MKTA), 65-85 (WYGL…MVLV), and 92-112 (ATGA…YLGL).

The protein belongs to the UPF0344 family.

The protein localises to the cell membrane. This Bacillus thuringiensis subsp. konkukian (strain 97-27) protein is UPF0344 protein BT9727_1053.